Reading from the N-terminus, the 219-residue chain is uncharacterized protein (219 aa).

Residues 1 to 26 (MNDRGVPNSRTGPSLLALLPAANSYA) form the signal peptide. Disordered stretches follow at residues 36–57 (AVGV…TRGG) and 88–219 (SGLG…GLCE). A compositionally biased stretch (low complexity) spans 127–173 (LSPPSALGSSPAGRGRPAPAIAAAKSSPLSASAAPGRCGARPRAPSR). Residues 176–202 (RERRPRGNPRAPLRRGARGRRRSHTRG) show a composition bias toward basic residues.

This is an uncharacterized protein from Gallid herpesvirus 2 (strain Chicken/Md5/ATCC VR-987) (GaHV-2).